Here is an 875-residue protein sequence, read N- to C-terminus: Alanine--tRNA ligase (875 aa).

Positions 564, 568, 666, and 670 each coordinate Zn(2+).

It belongs to the class-II aminoacyl-tRNA synthetase family. Homotetramer. Zn(2+) is required as a cofactor.

The protein localises to the cytoplasm. The catalysed reaction is tRNA(Ala) + L-alanine + ATP = L-alanyl-tRNA(Ala) + AMP + diphosphate. Catalyzes the attachment of alanine to tRNA(Ala) in a two-step reaction: alanine is first activated by ATP to form Ala-AMP and then transferred to the acceptor end of tRNA(Ala). Also edits incorrectly charged Ser-tRNA(Ala) and Gly-tRNA(Ala) via its editing domain. The polypeptide is Alanine--tRNA ligase (Sodalis glossinidius (strain morsitans)).